Here is a 387-residue protein sequence, read N- to C-terminus: AIAAVITFLILFTIFGNALVILAVLTSRSLRAPQNLFLVSLAAADILVATLIIPFSLANELLGYWYFRHTWCXVYLALDVLFCTSSIVHLCAISLDRYWAVSRALEYNSKRTPRRIKCIILTVWLIAAAISLPPLIYKGDQDPQPRGRPQCKLNQEAWYILSSSIGSFFVPCLIMILVYLRIYLIAKRSSSRRKPRAKGXPREGESKQPQLRPVGTSVSARPPALTSPLAVTGEANGHSKPTGERETPEDLVSPASPPSWPAIPNSGQGRKEGVCGTSPEEEAEEEEECGPEAVPASPALACSPSLQPPQGSRVLATLRGQVLLGRGVGTARGQWWRRRAQLTREKRFTFVLAVVIGVFVLCWFPFFFSYSLGAICPQHCKVPHGLF.

The chain crosses the membrane as a helical span at residues 1-25; the sequence is AIAAVITFLILFTIFGNALVILAVL. The Cytoplasmic portion of the chain corresponds to 26–36; that stretch reads TSRSLRAPQNL. Residues 37-62 traverse the membrane as a helical segment; that stretch reads FLVSLAAADILVATLIIPFSLANELL. The Extracellular portion of the chain corresponds to 63 to 72; sequence GYWYFRHTWC. C72 and C151 are joined by a disulfide. Residues 73–95 traverse the membrane as a helical segment; the sequence is XVYLALDVLFCTSSIVHLCAISL. Residues 96–117 are Cytoplasmic-facing; it reads DRYWAVSRALEYNSKRTPRRIK. Residues 118–140 form a helical membrane-spanning segment; sequence CIILTVWLIAAAISLPPLIYKGD. Topologically, residues 141-156 are extracellular; that stretch reads QDPQPRGRPQCKLNQE. Residues 157–180 traverse the membrane as a helical segment; the sequence is AWYILSSSIGSFFVPCLIMILVYL. At 181–351 the chain is on the cytoplasmic side; sequence RIYLIAKRSS…LTREKRFTFV (171 aa). The interval 193-303 is disordered; it reads RKPRAKGXPR…VPASPALACS (111 aa). Residues 279 to 290 show a composition bias toward acidic residues; the sequence is PEEEAEEEEECG. Residues 352–375 form a helical membrane-spanning segment; it reads LAVVIGVFVLCWFPFFFSYSLGAI. Topologically, residues 376-384 are extracellular; the sequence is CPQHCKVPH. A helical membrane pass occupies residues 385 to 387; it reads GLF.

The protein belongs to the G-protein coupled receptor 1 family. Adrenergic receptor subfamily. ADRA2B sub-subfamily. In terms of assembly, interacts with RAB26. Interacts with PPP1R9B. Interacts with GGA1, GGA2 and GGA3.

The protein localises to the cell membrane. Functionally, alpha-2 adrenergic receptors mediate the catecholamine-induced inhibition of adenylate cyclase through the action of G proteins. The polypeptide is Alpha-2B adrenergic receptor (ADRA2B) (Macroscelides proboscideus (Short-eared elephant shrew)).